The following is a 122-amino-acid chain: Small ribosomal subunit protein uS12 (122 aa).

A 3-methylthioaspartic acid modification is found at aspartate 89.

It belongs to the universal ribosomal protein uS12 family. As to quaternary structure, part of the 30S ribosomal subunit. Contacts proteins S8 and S17. May interact with IF1 in the 30S initiation complex.

With S4 and S5 plays an important role in translational accuracy. In terms of biological role, interacts with and stabilizes bases of the 16S rRNA that are involved in tRNA selection in the A site and with the mRNA backbone. Located at the interface of the 30S and 50S subunits, it traverses the body of the 30S subunit contacting proteins on the other side and probably holding the rRNA structure together. The combined cluster of proteins S8, S12 and S17 appears to hold together the shoulder and platform of the 30S subunit. The sequence is that of Small ribosomal subunit protein uS12 from Neorickettsia sennetsu (strain ATCC VR-367 / Miyayama) (Ehrlichia sennetsu).